Consider the following 551-residue polypeptide: MAKAFVFSLCLLLVFNGCLAARQSQLSPQNQCQLNQLQAREPDNRIQAEAGQIETWNFNQEDFQCAGVAASRITIQRNGLHLPSYSNAPQLIYIVQGRGVLGAVFSGCPETFEESQQSSQQGRQQEQEQERQQQQQGEQGRQQGQQEQQQERQGRQQGRQQQEEGRQQEQQQGQQGRPQQQQQFRQFDRHQKTRRIREGDVVAIPAGVAYWSYNDGDQELVAVNLFHVSSDHNQLDQNPRKFYLAGNPENEFNQQGQSQPRQQGEQGRPGQHQQPFGRPRQQEQQGSGNNVFSGFNTQLLAQALNVNEETARNLQGQNDNRNQIIRVRGNLDFVQPPRGRQEREHEERQQEQLQQERQQQGGQLMANGLEETFCSLRLKENIGNPERADIFSPRAGRISTLNSHNLPILRFLRLSAERGFFYRNGIYSPHWNVNAHSVVYVIRGNARVQVVNENGDAILDQEVQQGQLFIVPQNHGVIQQAGNQGFEYFAFKTEENAFINTLAGRTSFLRALPDEVLANAYQISREQARQLKYNRQETIALSSSQQRRAVV.

The first 20 residues, 1-20 (MAKAFVFSLCLLLVFNGCLA), serve as a signal peptide directing secretion. 2 disulfides stabilise this stretch: Cys32-Cys65 and Cys108-Cys374. In terms of domain architecture, Cupin type-1 1 spans 37–312 (LQAREPDNRI…ALNVNEETAR (276 aa)). Disordered stretches follow at residues 111–194 (TFEE…QKTR), 238–293 (NPRK…NVFS), and 311–361 (ARNL…QQQG). Low complexity-rich tracts occupy residues 114–124 (ESQQSSQQGRQ), 132–148 (QQQQQGEQGRQQGQQEQ), and 168–185 (QEQQQGQQGRPQQQQQFR). IgE-binding regions lie at residues 118 to 132 (SSQQGRQQEQEQERQ), 145 to 159 (QQEQQQERQGRQQGR), 161 to 175 (QQEEGRQQEQQQGQQ), and 225 to 239 (LFHVSSDHNQLDQNP). Positions 254–275 (QQGQSQPRQQGEQGRPGQHQQP) are enriched in low complexity. The segment at 281-295 (QQEQQGSGNNVFSGF) is igE-binding. 2 stretches are compositionally biased toward polar residues: residues 282–293 (QEQQGSGNNVFS) and 311–323 (ARNLQGQNDNRNQ). Basic and acidic residues predominate over residues 339–350 (GRQEREHEERQQ). The span at 351–361 (EQLQQERQQQG) shows a compositional bias: low complexity. Residues 367–372 (NGLEET) carry the NGXEET; peptidase recognition motif motif. The region spanning 380 to 529 (ENIGNPERAD…AYQISREQAR (150 aa)) is the Cupin type-1 2 domain. The segment at 510–524 (RALPDEVLANAYQIS) is igE-binding.

The protein belongs to the 11S seed storage protein (globulins) family. As to quaternary structure, hexamer of two trimers; each subunit is composed of an acidic and a basic chain derived from a single precursor and linked by a disulfide bond. Post-translationally, proteolytically processed from a single precursor to produce an acidic and a basic chain that are linked by a disulfide bond. As to expression, expressed in seed (at protein level).

Its function is as follows. Seed storage protein. The sequence is that of Prunin 1 Pru du 6.0101 from Prunus dulcis (Almond).